A 196-amino-acid polypeptide reads, in one-letter code: 3-isopropylmalate dehydratase small subunit (196 aa).

This sequence belongs to the LeuD family. LeuD type 1 subfamily. Heterodimer of LeuC and LeuD.

The enzyme catalyses (2R,3S)-3-isopropylmalate = (2S)-2-isopropylmalate. Its pathway is amino-acid biosynthesis; L-leucine biosynthesis; L-leucine from 3-methyl-2-oxobutanoate: step 2/4. Its function is as follows. Catalyzes the isomerization between 2-isopropylmalate and 3-isopropylmalate, via the formation of 2-isopropylmaleate. In Corynebacterium diphtheriae (strain ATCC 700971 / NCTC 13129 / Biotype gravis), this protein is 3-isopropylmalate dehydratase small subunit.